We begin with the raw amino-acid sequence, 66 residues long: Small ribosomal subunit protein bS21 (66 aa).

This sequence belongs to the bacterial ribosomal protein bS21 family.

This is Small ribosomal subunit protein bS21 from Rickettsia africae (strain ESF-5).